Consider the following 247-residue polypeptide: Probable transcriptional regulatory protein GTNG_2524 (247 aa).

Basic residues predominate over residues 1 to 14 (MAGHSKWKNIQRRK). A disordered region spans residues 1 to 21 (MAGHSKWKNIQRRKNAQDAKR).

This sequence belongs to the TACO1 family.

The protein localises to the cytoplasm. The sequence is that of Probable transcriptional regulatory protein GTNG_2524 from Geobacillus thermodenitrificans (strain NG80-2).